The chain runs to 191 residues: Ribosome assembly protein 3 (191 aa).

Residues 1-101 form a disordered region; it reads MAAAQVKNEK…NETHEKLSNI (101 aa). Low complexity predominate over residues 32-42; the sequence is DSESSSSSSSD. Positions 50-59 are enriched in basic and acidic residues; the sequence is EEPKPIKETK. Residues 76-85 show a composition bias toward polar residues; it reads VNSQEKQNSL.

It belongs to the RSA3 family. Associates with nucleolar pre-ribosomal particles.

Its subcellular location is the nucleus. It localises to the nucleolus. In terms of biological role, required for efficient biogenesis of the 60S ribosomal subunit. The polypeptide is Ribosome assembly protein 3 (RSA3) (Debaryomyces hansenii (strain ATCC 36239 / CBS 767 / BCRC 21394 / JCM 1990 / NBRC 0083 / IGC 2968) (Yeast)).